The chain runs to 126 residues: Glycine cleavage system H protein (126 aa).

The 83-residue stretch at 22–104 (KLRIGITDFA…YEKAWMIVIE (83 aa)) folds into the Lipoyl-binding domain. At lysine 63 the chain carries N6-lipoyllysine.

Belongs to the GcvH family. The glycine cleavage system is composed of four proteins: P, T, L and H. (R)-lipoate is required as a cofactor.

Functionally, the glycine cleavage system catalyzes the degradation of glycine. The H protein shuttles the methylamine group of glycine from the P protein to the T protein. Its function is as follows. Is also involved in protein lipoylation via its role as an octanoyl/lipoyl carrier protein intermediate. The protein is Glycine cleavage system H protein of Oceanobacillus iheyensis (strain DSM 14371 / CIP 107618 / JCM 11309 / KCTC 3954 / HTE831).